A 345-amino-acid chain; its full sequence is S-adenosylmethionine:tRNA ribosyltransferase-isomerase (345 aa).

It belongs to the QueA family. Monomer.

Its subcellular location is the cytoplasm. The catalysed reaction is 7-aminomethyl-7-carbaguanosine(34) in tRNA + S-adenosyl-L-methionine = epoxyqueuosine(34) in tRNA + adenine + L-methionine + 2 H(+). The protein operates within tRNA modification; tRNA-queuosine biosynthesis. Its function is as follows. Transfers and isomerizes the ribose moiety from AdoMet to the 7-aminomethyl group of 7-deazaguanine (preQ1-tRNA) to give epoxyqueuosine (oQ-tRNA). The protein is S-adenosylmethionine:tRNA ribosyltransferase-isomerase of Acidithiobacillus ferrooxidans (strain ATCC 53993 / BNL-5-31) (Leptospirillum ferrooxidans (ATCC 53993)).